The chain runs to 464 residues: MSNIGKVVQVIGPVVDIKFDEENLPDIYNAISIESGNAKIITEVAQHLGDDIVRTISMESTDGLMRGMDALDIGAPISVPVGKPVLGRLFNMLGQPIDENGEVEADEYSPIHRPAPSFEDQSVKPEMFETGIKVIDLIAPYQKGGKIGLFGGAGVGKTVIIQELINNIAKEHGGLSVFTGVGERTREGNDLYYEMQESGVINKTALVFGQMNEPPGARMRVALTGLTMAEHFRDEGQDVLLFIDNIFRFTQAGSEVSALLGRIPSAVGYQPTLATEMGSLQERITSTKHGSITSVQAVYVPADDLTDPAPATTFTHLDATTVLSRSISEIGIYPAVDPLASTSRILDPRVVGEEHYKVASDVKHILERYSELQDIIAILGVDELSEEDRLVVIRARRIQRFLSQPFSVAEQFTGYEGKYVPIKETIRGFKEILEGKYDDLPETAFLFKGSIDEVIESAKNMVKS.

An ATP-binding site is contributed by 151-158 (GGAGVGKT).

The protein belongs to the ATPase alpha/beta chains family. F-type ATPases have 2 components, CF(1) - the catalytic core - and CF(0) - the membrane proton channel. CF(1) has five subunits: alpha(3), beta(3), gamma(1), delta(1), epsilon(1). CF(0) has three main subunits: a(1), b(2) and c(9-12). The alpha and beta chains form an alternating ring which encloses part of the gamma chain. CF(1) is attached to CF(0) by a central stalk formed by the gamma and epsilon chains, while a peripheral stalk is formed by the delta and b chains.

The protein localises to the cell membrane. The enzyme catalyses ATP + H2O + 4 H(+)(in) = ADP + phosphate + 5 H(+)(out). Produces ATP from ADP in the presence of a proton gradient across the membrane. The catalytic sites are hosted primarily by the beta subunits. The polypeptide is ATP synthase subunit beta (Clostridium kluyveri (strain ATCC 8527 / DSM 555 / NBRC 12016 / NCIMB 10680 / K1)).